An 816-amino-acid chain; its full sequence is Protein kinase C-binding protein NELL2 (816 aa).

The N-terminal stretch at 1-21 (MESRVLLRTFCLIFGLGAVWG) is a signal peptide. N-linked (GlcNAc...) asparagine glycosylation is found at Asn-53, Asn-225, Asn-293, and Asn-298. The region spanning 64–228 (PRSIKASTAT…AQCPDLNRTC (165 aa)) is the Laminin G-like domain. A VWFC 1 domain is found at 272–331 (RTCTMKGTTYREFESWIDGCKNCTCLNGTIQCETLICPNPDCPLKSALAYVDGKCCKECK). Residues 397–439 (GYDFCSERHNCMENSICRNLNDRAVCSCRDGFRALREDNAYCE) form the EGF-like 1 domain. 3 cysteine pairs are disulfide-bonded: Cys-401/Cys-413, Cys-407/Cys-422, and Cys-424/Cys-438. Positions 440, 441, and 443 each coordinate Ca(2+). In terms of domain architecture, EGF-like 2; calcium-binding spans 440 to 481 (DIDECAEGRHYCRENTMCVNTPGSFMCICKTGYIRIDDYSCT). Disulfide bonds link Cys-444–Cys-457, Cys-451–Cys-466, Cys-468–Cys-480, Cys-486–Cys-499, Cys-493–Cys-508, Cys-510–Cys-521, Cys-525–Cys-535, Cys-529–Cys-541, and Cys-543–Cys-552. The Ca(2+) site is built by Asn-459, Thr-460, and Ser-463. Positions 482–522 (EHDECITNQHNCDENALCFNTVGGHNCVCKPGYTGNGTTCK) constitute an EGF-like 3; calcium-binding domain. Asn-517 carries N-linked (GlcNAc...) asparagine glycosylation. In terms of domain architecture, EGF-like 4 spans 523-553 (AFCKDGCRNGGACIAANVCACPQGFTGPSCE). The O-linked (GlcNAc...) threonine glycan is linked to Thr-548. Ca(2+) contacts are provided by Asp-555, Ile-556, and Glu-558. The region spanning 555 to 601 (DIDECSDGFVQCDSRANCINLPGWYHCECRDGYHDNGMFSPSGESCE) is the EGF-like 5; calcium-binding domain. 3 disulfide bridges follow: Cys-559/Cys-572, Cys-566/Cys-581, and Cys-583/Cys-600. Ca(2+) is bound by residues Asn-574, Leu-575, and Trp-578. Positions 602, 603, and 605 each coordinate Ca(2+). The EGF-like 6; calcium-binding domain maps to 602 to 637 (DIDECGTGRHSCANDTICFNLDGGYDCRCPHGKNCT). Cystine bridges form between Cys-606/Cys-619, Cys-613/Cys-628, and Cys-630/Cys-636. An N-linked (GlcNAc...) asparagine glycan is attached at Asn-615. Ca(2+) is bound by residues Asn-621, Leu-622, and Gly-625. A glycan (N-linked (GlcNAc...) asparagine) is linked at Asn-635. VWFC domains follow at residues 638 to 693 (GDCI…PECD) and 698 to 756 (SQCL…PRCV).

In terms of assembly, homotrimer. Binds to PRKCB. Interacts with NICOL1; this interaction triggers epididymal differentiation. Interacts (via the EGF domains) with ROBO3 (via Fibronectin type-III 1 domain) with a 3:3 stoichiometry; this interaction promotes oligomerization of ROBO3 resulting in the repulsion of commissural axons in the midline.

The protein localises to the secreted. Plays multiple roles in neural tissues, regulates neuronal proliferation, survival, differentiation, polarization, as well as axon guidance and synaptic functions. Plays an important role in axon development during neuronal differentiation through the MAPK intracellular signaling pathway. Via binding to its receptor ROBO3, plays a role in axon guidance, functioning as a repulsive axon guidance cue that contributes to commissural axon guidance to the midline. Required for neuron survival through the modulation of MAPK signaling pathways too. Involved in the regulation of hypothalamic GNRH secretion and the control of puberty. Its function is as follows. Epididymal-secreted protein that signals through a ROS1-pathway to regulate the epididymal initial segment (IS) maturation, sperm maturation and male fertility. The polypeptide is Protein kinase C-binding protein NELL2 (Homo sapiens (Human)).